We begin with the raw amino-acid sequence, 433 residues long: MSTEKFTITEHLVPGSHIREYPGSTVNQQDVLKIHVKNYTPKREGPVPDDAITFIATHGVGLPKELYEPLWDELLDQASGFHIRAIWMADVASMNQSGIHNEDKLSMDCSWMDHARDLLLMINHFRDQMPRPLVGIGHSFGGNIITNLAYLHPRLFTTLLLLDPLIQLSPPSLGFGTDAPSAINYTLWRDDVWPSREEAIRANRAIMQGMDPRCLDRMTKHFFRDLPTPLYPDVEAIKARFGTTADSTTTPVTLTTPKYHELVAQIRQNFNARDPKTGRIEVPRDTHADMDPLVAYIPLYRPEPRSTFRRLETLRPSCLWVIAGATFLNIDEIREGVKICGSGIGGSGGVPDGRVREVVLPGFGHLMPFQEVKTVAGTCVVWLQQEMDRFRQTERQWKEDRDGKSHQAVEENWYKVLKPIPTGRKKRSDKGKL.

The tract at residues 58–246 is abhydrolase domain; the sequence is HGVGLPKELY…IKARFGTTAD (189 aa). Valine 60 contributes to the substrate binding site. The Nucleophile role is filled by serine 139. Phenylalanine 140 is a substrate binding site. Catalysis depends on residues aspartate 163 and histidine 365.

The protein belongs to the AB hydrolase superfamily. MpaH hydrolase family. As to quaternary structure, homodimer.

The protein localises to the peroxisome matrix. The enzyme catalyses mycophenolyl-CoA + H2O = mycophenolate + CoA + H(+). Its pathway is secondary metabolite biosynthesis; terpenoid biosynthesis. In terms of biological role, type I acyl-CoA thioesterase; part of the gene cluster that mediates the biosynthesis of mycophenolic acid (MPA), the first isolated antibiotic natural product in the world obtained from a culture of Penicillium brevicompactum in 1893. MpaH acts as a peroxisomal acyl-CoA hydrolase that converts MPA-CoA into the final product MPA. The first step of the pathway is the synthesis of 5-methylorsellinic acid (5MOA) by the cytosolic polyketide synthase mpaC. 5MOA is then converted to the phthalide compound 5,7-dihydroxy-4,6-dimethylphthalide (DHMP) by the endoplasmic reticulum-bound cytochrome P450 monooxygenase mpaDE. MpaDE first catalyzes hydroxylation of 5-MOA to 4,6-dihydroxy-2-(hydroxymethyl)-3-methylbenzoic acid (DHMB). MpaDE then acts as a lactone synthase that catalyzes the ring closure to convert DHMB into DHMP. The next step is the prenylation of DHMP by the Golgi apparatus-associated prenyltransferase mpaA to yield farnesyl-DHMP (FDHMP). The ER-bound oxygenase mpaB then mediates the oxidative cleavage the C19-C20 double bond in FDHMP to yield FDHMP-3C via a mycophenolic aldehyde intermediate. The O-methyltransferase mpaG catalyzes the methylation of FDHMP-3C to yield MFDHMP-3C. After the cytosolic methylation of FDHMP-3C, MFDHMP-3C enters into peroxisomes probably via free diffusion due to its low molecular weight. Upon a peroxisomal CoA ligation reaction, catalyzed by a beta-oxidation component enzyme acyl-CoA ligase ACL891, MFDHMP-3C-CoA would then be restricted to peroxisomes for the following beta-oxidation pathway steps. The peroxisomal beta-oxidation machinery than converts MFDHMP-3C-CoA into MPA_CoA, via a beta-oxidation chain-shortening process. Finally mpaH acts as a peroxisomal acyl-CoA hydrolase with high substrate specificity toward MPA-CoA to release the final product MPA. This chain is Type I acyl-CoA thioesterase mpaH, found in Penicillium brevicompactum.